A 306-amino-acid chain; its full sequence is Agmatinase (306 aa).

6 residues coordinate Mn(2+): H126, D149, H151, D153, D230, and D232.

It belongs to the arginase family. Agmatinase subfamily. Mn(2+) serves as cofactor.

The catalysed reaction is agmatine + H2O = urea + putrescine. The protein operates within amine and polyamine biosynthesis; putrescine biosynthesis via agmatine pathway; putrescine from agmatine: step 1/1. Catalyzes the formation of putrescine from agmatine. In Serratia proteamaculans (strain 568), this protein is Agmatinase.